The following is a 289-amino-acid chain: Glycine--tRNA ligase alpha subunit (289 aa).

Belongs to the class-II aminoacyl-tRNA synthetase family. Tetramer of two alpha and two beta subunits.

It localises to the cytoplasm. The catalysed reaction is tRNA(Gly) + glycine + ATP = glycyl-tRNA(Gly) + AMP + diphosphate. This is Glycine--tRNA ligase alpha subunit (glyQ) from Rickettsia prowazekii (strain Madrid E).